The primary structure comprises 635 residues: Glutamine--fructose-6-phosphate aminotransferase [isomerizing] (635 aa).

C2 acts as the Nucleophile; for GATase activity in catalysis. The Glutamine amidotransferase type-2 domain occupies 2–218 (CGIVGMVAGR…EGDIADVHRD (217 aa)). SIS domains follow at residues 299-439 (FERL…AKKI) and 472-625 (CARH…IDQP). The For Fru-6P isomerization activity role is filled by K630.

Homodimer.

The protein localises to the cytoplasm. The catalysed reaction is D-fructose 6-phosphate + L-glutamine = D-glucosamine 6-phosphate + L-glutamate. Its function is as follows. Catalyzes the first step in hexosamine metabolism, converting fructose-6P into glucosamine-6P using glutamine as a nitrogen source. The chain is Glutamine--fructose-6-phosphate aminotransferase [isomerizing] from Treponema pallidum (strain Nichols).